The chain runs to 102 residues: Carboxysome shell protein CcmK2 (102 aa).

The 87-residue stretch at 4–90 folds into the BMC domain; it reads AVGMIETRGF…PHENLEYVLP (87 aa).

The protein belongs to the bacterial microcompartments protein family. CcmK subfamily. As to quaternary structure, homohexamer. Stacked hexamers, with the concave faces together, have also been crystallized. Interacts preferentially with itself, then with CcmK1 and CcmK4a in vitro. May interact with CcmL, this occurs at very high CcmK2 concentrations. Interacts with CcmN and CcmO in the carboxysome.

It localises to the carboxysome. Probably the major shell protein of the carboxysome, a polyhedral inclusion where RuBisCO (ribulose bisphosphate carboxylase, rbcL-rbcS) is sequestered. Assembles into hexamers which make sheets that form the facets of the polyhedral carboxysome. The hexamer central pore probably regulates metabolite flux. In Thermosynechococcus vestitus (strain NIES-2133 / IAM M-273 / BP-1), this protein is Carboxysome shell protein CcmK2.